The sequence spans 354 residues: Guanine nucleotide-binding protein G(o) subunit alpha (354 aa).

G2 is lipidated: N-myristoyl glycine. A lipid anchor (S-palmitoyl cysteine) is attached at C3. One can recognise a G-alpha domain in the interval K32 to Y354. Residues K35–T48 form a G1 motif region. 9 residues coordinate GTP: E43, K46, S47, T48, S152, L176, R177, T178, and R179. Mg(2+) is bound at residue S47. The tract at residues D174–T182 is G2 motif. T182 contacts Mg(2+). The G3 motif stretch occupies residues F197–R206. Position 205 is a 5-glutamyl histamine (Q205). The segment at I266–D273 is G4 motif. N270, D273, and C325 together coordinate GTP. Positions T324 to T329 are G5 motif. The S-palmitoyl cysteine moiety is linked to residue C351.

Belongs to the G-alpha family. G(i/o/t/z) subfamily. As to quaternary structure, g proteins are composed of 3 units; alpha, beta and gamma. The alpha chain contains the guanine nucleotide binding site. Forms a complex with GNB1 and GNG3. Interacts with RGS14. Interacts with RGS16. Interacts with RGS19. Interacts (when palmitoylated) with ADGRG3. In terms of processing, histaminylated at Gln-205 residues by TGM2.

It localises to the cell membrane. Its subcellular location is the membrane. The catalysed reaction is GTP + H2O = GDP + phosphate + H(+). Its activity is regulated as follows. The GTPase activity is promoted by GTPAse activators, such as RGS14, RGS16 and RGS19. Functionally, guanine nucleotide-binding proteins (G proteins) function as transducers downstream of G protein-coupled receptors (GPCRs) in numerous signaling cascades. The alpha chain contains the guanine nucleotide binding site and alternates between an active, GTP-bound state and an inactive, GDP-bound state. Signaling by an activated GPCR promotes GDP release and GTP binding. The alpha subunit has a low GTPase activity that converts bound GTP to GDP, thereby terminating the signal. Both GDP release and GTP hydrolysis are modulated by numerous regulatory proteins. Signaling is mediated via effector proteins, such as adenylate cyclase. Inhibits adenylate cyclase activity, leading to decreased intracellular cAMP levels. The protein is Guanine nucleotide-binding protein G(o) subunit alpha (GNAO1) of Bos taurus (Bovine).